The sequence spans 104 residues: L-rhamnose mutarotase (104 aa).

Y18 contributes to the substrate binding site. H22 acts as the Proton donor in catalysis. Residues Y41 and 76–77 (WW) each bind substrate.

Belongs to the rhamnose mutarotase family. As to quaternary structure, homodimer.

The protein localises to the cytoplasm. It carries out the reaction alpha-L-rhamnose = beta-L-rhamnose. It participates in carbohydrate metabolism; L-rhamnose metabolism. Functionally, involved in the anomeric conversion of L-rhamnose. The protein is L-rhamnose mutarotase of Mannheimia succiniciproducens (strain KCTC 0769BP / MBEL55E).